The following is a 317-amino-acid chain: Nitrilase (317 aa).

The CN hydrolase domain occupies Val-5–Met-280. Glu-45 acts as the Proton acceptor in catalysis. Lys-125 is an active-site residue. Cys-165 acts as the Nucleophile in catalysis.

The protein belongs to the carbon-nitrogen hydrolase superfamily. Nitrilase family.

It carries out the reaction a nitrile + 2 H2O = a carboxylate + NH4(+). Its function is as follows. Nitrilase that hydrolyzes preferentially 4-cyanopyridine. Is also able to hydrolyze some aliphatic nitriles, such as phenylacetonitrile. The chain is Nitrilase from Meyerozyma guilliermondii (strain ATCC 6260 / CBS 566 / DSM 6381 / JCM 1539 / NBRC 10279 / NRRL Y-324) (Yeast).